The primary structure comprises 240 residues: Guanylate kinase (240 aa).

A Guanylate kinase-like domain is found at 56–236 (GRIFVITGPS…TLNELKSILL (181 aa)). 63 to 70 (GPSGVGKS) serves as a coordination point for ATP.

It belongs to the guanylate kinase family.

It is found in the cytoplasm. It catalyses the reaction GMP + ATP = GDP + ADP. Functionally, essential for recycling GMP and indirectly, cGMP. The polypeptide is Guanylate kinase (gmk) (Mycoplasma genitalium (strain ATCC 33530 / DSM 19775 / NCTC 10195 / G37) (Mycoplasmoides genitalium)).